A 382-amino-acid polypeptide reads, in one-letter code: tRNA(Met) cytidine acetate ligase (382 aa).

ATP contacts are provided by residues 7–20 (ITEY…HVYH), G100, N153, and R178.

Belongs to the TmcAL family.

The protein localises to the cytoplasm. It carries out the reaction cytidine(34) in elongator tRNA(Met) + acetate + ATP = N(4)-acetylcytidine(34) in elongator tRNA(Met) + AMP + diphosphate. Catalyzes the formation of N(4)-acetylcytidine (ac(4)C) at the wobble position of elongator tRNA(Met), using acetate and ATP as substrates. First activates an acetate ion to form acetyladenylate (Ac-AMP) and then transfers the acetyl group to tRNA to form ac(4)C34. This chain is tRNA(Met) cytidine acetate ligase, found in Staphylococcus carnosus (strain TM300).